Here is a 344-residue protein sequence, read N- to C-terminus: Mitogen-activated protein kinase mpkC (344 aa).

The Protein kinase domain maps to Y19–L298. ATP is bound by residues V25–V33 and K48. Residue D140 is the Proton acceptor of the active site. A Phosphothreonine modification is found at T170. Residues T170–Y172 carry the TXY motif. Position 172 is a phosphotyrosine (Y172).

This sequence belongs to the protein kinase superfamily. Ser/Thr protein kinase family. MAP kinase subfamily. HOG1 sub-subfamily. Mg(2+) is required as a cofactor. In terms of processing, dually phosphorylated on Thr-170 and Tyr-172, which activates the enzyme.

It catalyses the reaction L-seryl-[protein] + ATP = O-phospho-L-seryl-[protein] + ADP + H(+). The catalysed reaction is L-threonyl-[protein] + ATP = O-phospho-L-threonyl-[protein] + ADP + H(+). Its activity is regulated as follows. Activated by tyrosine and threonine phosphorylation. Mitogen-activated protein kinase required for growth on media where sorbitol or mannitol is the sole carbon source. The polypeptide is Mitogen-activated protein kinase mpkC (mpkC) (Aspergillus oryzae (strain ATCC 42149 / RIB 40) (Yellow koji mold)).